An 821-amino-acid polypeptide reads, in one-letter code: Serine/threonine-protein kinase CTR1 (821 aa).

Disordered regions lie at residues 1 to 76 and 481 to 502; these read MEMP…LNNQ and NPGG…PSAN. The segment covering 14 to 25 has biased composition (low complexity); that stretch reads SQFSDDQVSVSV. A compositionally biased stretch (polar residues) spans 35–49; it reads SLSSENRSNHNSGNT. Residues 551–809 enclose the Protein kinase domain; it reads LNIKEKIGAG…TIMDLLRPLI (259 aa). Residues 557–565 and lysine 578 each bind ATP; that span reads IGAGSFGTV. The active-site Proton acceptor is the aspartate 676.

This sequence belongs to the protein kinase superfamily. TKL Ser/Thr protein kinase family. RAF subfamily. As to quaternary structure, interacts with EIN2 (via C-terminus). Expressed in both seedlings and adult plants.

It carries out the reaction L-seryl-[protein] + ATP = O-phospho-L-seryl-[protein] + ADP + H(+). The catalysed reaction is L-threonyl-[protein] + ATP = O-phospho-L-threonyl-[protein] + ADP + H(+). Kinase activity is inhibited by C24:1-ceramide during hypoxia (e.g. submergences). In terms of biological role, acts as a negative regulator in the ethylene response pathway. Phosphorylates the cytosolic C-terminal domain of EIN2, preventing the signaling in the absence of ethylene. Interacts with C24:1-ceramide upon hypoxic conditions (e.g. submergences) to in turn regulate EIN2 endoplasmic reticulum (ER)-to-nucleus translocation and EIN3 stabilization. The chain is Serine/threonine-protein kinase CTR1 from Arabidopsis thaliana (Mouse-ear cress).